Here is a 336-residue protein sequence, read N- to C-terminus: Putative ataxin-3 homolog (336 aa).

Residues 10–193 (GGLLYHEVQE…KECPMATEGS (184 aa)) form the Josephin domain. Cys23 acts as the Nucleophile in catalysis. His132 (proton acceptor) is an active-site residue. Asn147 is an active-site residue. Residues 244–263 (QEEADLNAAIAASLMDTGGP) form the UIM domain. The segment at 281–336 (IESTSGEMSKDGNLEEQGANKSETSEPNSDNIESASGSNPKQNTTSLEGKESIKED) is disordered. Residues 299 to 327 (ANKSETSEPNSDNIESASGSNPKQNTTSL) are compositionally biased toward polar residues.

Its subcellular location is the nucleus. The catalysed reaction is Thiol-dependent hydrolysis of ester, thioester, amide, peptide and isopeptide bonds formed by the C-terminal Gly of ubiquitin (a 76-residue protein attached to proteins as an intracellular targeting signal).. Functionally, interacts with key regulators of transcription and represses transcription. Acts as a histone-binding protein that regulates transcription. Acts as a deubiquitinating enzyme. This Oryza sativa subsp. japonica (Rice) protein is Putative ataxin-3 homolog.